Reading from the N-terminus, the 103-residue chain is Histone H4.2 (103 aa).

The segment covering 1 to 14 has biased composition (gly residues); sequence MSGRGKGGKGLGKG. The tract at residues 1 to 20 is disordered; the sequence is MSGRGKGGKGLGKGGAKRHR. An N6-acetyl-N6-methyllysine; alternate modification is found at lysine 6. An N6-methyllysine; alternate mark is found at lysine 6, lysine 9, and lysine 13. At lysine 13 the chain carries N6-acetyl-N6-methyllysine; alternate. The DNA-binding element occupies 17–21; sequence KRHRK. N6-glutaryllysine is present on lysine 92.

It belongs to the histone H4 family. The nucleosome is a histone octamer containing two molecules each of H2A, H2B, H3 and H4 assembled in one H3-H4 heterotetramer and two H2A-H2B heterodimers. The octamer wraps approximately 147 bp of DNA. In terms of processing, glutarylation at Lys-92 (H4K91glu) destabilizes nucleosomes by promoting dissociation of the H2A-H2B dimers from nucleosomes.

Its subcellular location is the nucleus. The protein resides in the chromosome. Functionally, core component of nucleosome. Nucleosomes wrap and compact DNA into chromatin, limiting DNA accessibility to the cellular machineries which require DNA as a template. Histones thereby play a central role in transcription regulation, DNA repair, DNA replication and chromosomal stability. DNA accessibility is regulated via a complex set of post-translational modifications of histones, also called histone code, and nucleosome remodeling. The protein is Histone H4.2 (hhfB) of Emericella nidulans (strain FGSC A4 / ATCC 38163 / CBS 112.46 / NRRL 194 / M139) (Aspergillus nidulans).